Here is a 291-residue protein sequence, read N- to C-terminus: MFIIELIKGIILGVVEGLTEFAPVSSTGHMILVDDMWLKSSEFLGSQSAFTFKIVIQLGSVFAAAWVFRERFLEILHIGKHKHVEGQNDQQRRSKPRRLNLLHVLVGMVPAGILGLLFDDFIEEHLFSVPTVMIGLFVGAIYMIIADKYSVKVKNPQTVDQINYFQAFVIGISQAVAMWPGFSRSGSTISTGVLMKLNHKAASDFTFIMAVPIMLAASGLSLLKHYQDIQIADIPFYILGFLAAFTVGLIAIKTFLHLINKIKLIPFAIYRIVLVIFIAILYFGFGIGKGI.

8 helical membrane passes run 1–21 (MFII…LTEF), 48–68 (SAFT…AWVF), 102–122 (LHVL…DDFI), 126–146 (LFSV…MIIA), 162–182 (INYF…WPGF), 203–223 (SDFT…LSLL), 231–251 (IADI…GLIA), and 267–287 (FAIY…GFGI).

It belongs to the UppP family.

It is found in the cell membrane. The enzyme catalyses di-trans,octa-cis-undecaprenyl diphosphate + H2O = di-trans,octa-cis-undecaprenyl phosphate + phosphate + H(+). Functionally, catalyzes the dephosphorylation of undecaprenyl diphosphate (UPP). Confers resistance to bacitracin. In Staphylococcus aureus (strain bovine RF122 / ET3-1), this protein is Undecaprenyl-diphosphatase.